The sequence spans 417 residues: UDP-N-acetylglucosamine 1-carboxyvinyltransferase (417 aa).

A phosphoenolpyruvate-binding site is contributed by 22 to 23 (KN). R92 is a UDP-N-acetyl-alpha-D-glucosamine binding site. C116 (proton donor) is an active-site residue. At C116 the chain carries 2-(S-cysteinyl)pyruvic acid O-phosphothioketal. UDP-N-acetyl-alpha-D-glucosamine is bound by residues D304 and V326.

Belongs to the EPSP synthase family. MurA subfamily.

It localises to the cytoplasm. The enzyme catalyses phosphoenolpyruvate + UDP-N-acetyl-alpha-D-glucosamine = UDP-N-acetyl-3-O-(1-carboxyvinyl)-alpha-D-glucosamine + phosphate. It participates in cell wall biogenesis; peptidoglycan biosynthesis. Cell wall formation. Adds enolpyruvyl to UDP-N-acetylglucosamine. The sequence is that of UDP-N-acetylglucosamine 1-carboxyvinyltransferase from Syntrophotalea carbinolica (strain DSM 2380 / NBRC 103641 / GraBd1) (Pelobacter carbinolicus).